The sequence spans 256 residues: Tumor necrosis factor receptor superfamily member 9 (256 aa).

Positions 1–23 (MGNNCYNVVVIVLLLVGCEKVGA) are cleaved as a signal peptide. TNFR-Cys repeat units follow at residues 24 to 45 (VQNS…PVCK), 46 to 85 (SCPP…NAEC), 86 to 117 (ECIE…QGCK), and 118 to 159 (TCSL…VVCG). Residues 24–187 (VQNSCDNCQP…GPGGHSLQVL (164 aa)) are Extracellular-facing. Disulfide bonds link cysteine 28/cysteine 37, cysteine 31/cysteine 44, cysteine 47/cysteine 61, cysteine 64/cysteine 77, cysteine 67/cysteine 85, cysteine 87/cysteine 93, cysteine 98/cysteine 105, cysteine 101/cysteine 116, and cysteine 119/cysteine 133. Residues asparagine 128 and asparagine 138 are each glycosylated (N-linked (GlcNAc...) asparagine). A disulfide bridge links cysteine 139 with cysteine 158. The helical transmembrane segment at 188 to 208 (TLFLALTSALLLALIFITLLF) threads the bilayer. The Cytoplasmic portion of the chain corresponds to 209 to 256 (SVLKWIRKKFPHIFKQPFKKTTGAAQEEDACSCRCPQEEEGGGGGYEL).

As to quaternary structure, predominantly homodimeric, but may also exist as a monomer. Associates with p56-LCK. Interacts with TRAF1, TRAF2 and TRAF3. As to expression, expressed in activated thymocytes, splenic T cells, CD4(+), and CD8(+) T-cells.

The protein resides in the cell membrane. Receptor for TNFSF9/4-1BBL. Conveys a signal that enhances CD8(+) T-cell survival, cytotoxicity, and mitochondrial activity, thereby promoting immunity against viruses and tumors. The protein is Tumor necrosis factor receptor superfamily member 9 (Tnfrsf9) of Mus musculus (Mouse).